The following is a 696-amino-acid chain: Catalase (696 aa).

Catalysis depends on residues H64 and N137. The disordered stretch occupies residues 187–211; the sequence is SLAQGSQISSERGSPKAYSNTEPNK. A compositionally biased stretch (polar residues) spans 189–208; that stretch reads AQGSQISSERGSPKAYSNTE. Y353 is a heme binding site.

The protein belongs to the catalase family. Requires heme as cofactor.

The enzyme catalyses 2 H2O2 = O2 + 2 H2O. Occurs in almost all aerobically respiring organisms and serves to protect cells from the toxic effects of hydrogen peroxide. This is Catalase from Penicillium janthinellum (Penicillium vitale).